We begin with the raw amino-acid sequence, 480 residues long: Glycogen synthase (480 aa).

Lys-15 is an ADP-alpha-D-glucose binding site.

The protein belongs to the glycosyltransferase 1 family. Bacterial/plant glycogen synthase subfamily.

It catalyses the reaction [(1-&gt;4)-alpha-D-glucosyl](n) + ADP-alpha-D-glucose = [(1-&gt;4)-alpha-D-glucosyl](n+1) + ADP + H(+). The protein operates within glycan biosynthesis; glycogen biosynthesis. Functionally, synthesizes alpha-1,4-glucan chains using ADP-glucose. The polypeptide is Glycogen synthase (Granulibacter bethesdensis (strain ATCC BAA-1260 / CGDNIH1)).